Consider the following 352-residue polypeptide: B1 bradykinin receptor (352 aa).

Topologically, residues 1–41 are extracellular; sequence MASWPPLELQSSNQSQLFPQNATACDNAPEAWDLLHRVLPT. N-linked (GlcNAc...) asparagine glycosylation is found at Asn-13 and Asn-21. A helical transmembrane segment spans residues 42–62; it reads FIISICSFGLLGNLFVLLVFL. Topologically, residues 63–72 are cytoplasmic; the sequence is LPRRRLNVAE. Residues 73-93 traverse the membrane as a helical segment; that stretch reads IYLANLAASDLVFVLGLPFWA. Residues 94–110 are Extracellular-facing; that stretch reads ENIWNQFNWPFGALLCR. A disulfide bridge connects residues Cys-109 and Cys-188. A helical transmembrane segment spans residues 111-131; sequence VINGIIKANLFISIFLVVAIS. Residues 132 to 153 lie on the Cytoplasmic side of the membrane; that stretch reads QDRYCVLVHPMASRRRQRRRQA. The helical transmembrane segment at 154–174 threads the bilayer; it reads RVTCVLIWVVGGLLSIPTFLL. The Extracellular portion of the chain corresponds to 175 to 206; that stretch reads RSIQAVPDLNITACILLLPHEAWHFARIVELN. Asn-184 is a glycosylation site (N-linked (GlcNAc...) asparagine). A helical transmembrane segment spans residues 207-227; it reads ILAFLLPLAAIIFFNYHILAS. Topologically, residues 228 to 250 are cytoplasmic; the sequence is LRGREEVSRTRCGGSKDSKTTAL. A helical membrane pass occupies residues 251 to 271; the sequence is ILTLVVAFLVCWAPYHFFAFL. At 272 to 294 the chain is on the extracellular side; sequence EFLFQVQAVRGCFWEDFIDLGLQ. A helical membrane pass occupies residues 295–315; that stretch reads LANFLAFTNSSLNPVIYVFVG. At 316 to 352 the chain is on the cytoplasmic side; sequence RLFRTKVWELYKQCTPKSLAPISSSHRKEIFQLFWRN. Cys-329 carries S-palmitoyl cysteine lipidation.

This sequence belongs to the G-protein coupled receptor 1 family. Bradykinin receptor subfamily. BDKRB1 sub-subfamily.

The protein localises to the cell membrane. Functionally, this is a receptor for bradykinin. Could be a factor in chronic pain and inflammation. The sequence is that of B1 bradykinin receptor (BDKRB1) from Macaca mulatta (Rhesus macaque).